The chain runs to 203 residues: Endo-type membrane-bound lytic murein transglycosylase A (203 aa).

Residues 1–15 (MKLRWLLILVVFLAG) form the signal peptide. Cysteine 16 is lipidated: N-palmitoyl cysteine. Cysteine 16 carries the S-diacylglycerol cysteine lipid modification.

Belongs to the transglycosylase Slt family.

It localises to the cell outer membrane. The catalysed reaction is Endolytic cleavage of the (1-&gt;4)-beta-glycosidic linkage between N-acetylmuramic acid (MurNAc) and N-acetylglucosamine (GlcNAc) residues in peptidoglycan with concomitant formation of a 1,6-anhydrobond in the MurNAc residue.. Functionally, murein-degrading enzyme. May play a role in recycling of muropeptides during cell elongation and/or cell division. Preferentially cleaves at a distance of more than two disaccharide units from the ends of the glycan chain. The polypeptide is Endo-type membrane-bound lytic murein transglycosylase A (Klebsiella pneumoniae subsp. pneumoniae (strain ATCC 700721 / MGH 78578)).